A 490-amino-acid chain; its full sequence is MSRFDTLLQSIARTTVLCVGDLMLDEFVYGEVSRISPEAPTPVIAVQRSEINVGGAGNVARNIAAIGARCIFVGLIGDDEAGRTLSAEIARESRIEPLLVCDPARPTTRKVRFVSEHFSTHMLRADWETASAASSEIEQRLLDAILPQLQRADIVLLSDYAKGVLTERVIVSVIEAARKLGKRVIVDPKSANFAIYRGATLLTPNRKEFVSATRSAAETVDDIAAAAQDAMALADCEAMLVTQSEHGMTLVPRVGEPIHVPAMPVKVRDVSGAGDTVAAVLAVVLAAGADWATAMRAASAAAAVAVSKNGTAVVTPAELRRKILPHASLAAEEKIIGSEAELDLRLAEWRREGLRVGFTNGCFDILHPGHVKVLTAARGACDRLIVGLNSDASVRRLKGESRPVQNERARAEVLAALEAVDLVAIFGEDTPLKLIKRIVPSVLVKGGDYTREQVVGHEIVAARGGEVLLVDVLPGFSTTSLVEKAREGTT.

The ribokinase stretch occupies residues 1–330 (MSRFDTLLQS…RKILPHASLA (330 aa)). 205–208 (NRKE) serves as a coordination point for ATP. Aspartate 275 is a catalytic residue. The segment at 358–490 (FTNGCFDILH…LVEKAREGTT (133 aa)) is cytidylyltransferase.

This sequence in the N-terminal section; belongs to the carbohydrate kinase PfkB family. It in the C-terminal section; belongs to the cytidylyltransferase family. In terms of assembly, homodimer.

It carries out the reaction D-glycero-beta-D-manno-heptose 7-phosphate + ATP = D-glycero-beta-D-manno-heptose 1,7-bisphosphate + ADP + H(+). The enzyme catalyses D-glycero-beta-D-manno-heptose 1-phosphate + ATP + H(+) = ADP-D-glycero-beta-D-manno-heptose + diphosphate. It functions in the pathway nucleotide-sugar biosynthesis; ADP-L-glycero-beta-D-manno-heptose biosynthesis; ADP-L-glycero-beta-D-manno-heptose from D-glycero-beta-D-manno-heptose 7-phosphate: step 1/4. The protein operates within nucleotide-sugar biosynthesis; ADP-L-glycero-beta-D-manno-heptose biosynthesis; ADP-L-glycero-beta-D-manno-heptose from D-glycero-beta-D-manno-heptose 7-phosphate: step 3/4. Its function is as follows. Catalyzes the phosphorylation of D-glycero-D-manno-heptose 7-phosphate at the C-1 position to selectively form D-glycero-beta-D-manno-heptose-1,7-bisphosphate. In terms of biological role, catalyzes the ADP transfer from ATP to D-glycero-beta-D-manno-heptose 1-phosphate, yielding ADP-D-glycero-beta-D-manno-heptose. The sequence is that of Bifunctional protein HldE from Rhodopseudomonas palustris (strain BisB5).